A 346-amino-acid chain; its full sequence is NADH-quinone oxidoreductase subunit H (346 aa).

8 consecutive transmembrane segments (helical) span residues 6–26 (ILFWLLKSGLFFFILITACAY), 76–96 (IMYLIAPAISMTCAIMAWSVV), 128–148 (ILFLFAISSLAVYGIIIAGWA), 166–186 (ISYELPLSMSVVSIVILTGSL), 198–218 (LWNIFKLPGFIAFCLFVVAMF), 260–280 (ITMSCVVTLLFFGGYQVPFGI), 289–309 (LFGLFFFLGKVLFFTFLFVWV), and 324–344 (LGWKKLIPWAVLNILIASLYI).

The protein belongs to the complex I subunit 1 family. NDH-1 is composed of 14 different subunits. Subunits NuoA, H, J, K, L, M, N constitute the membrane sector of the complex.

It localises to the cell inner membrane. It carries out the reaction a quinone + NADH + 5 H(+)(in) = a quinol + NAD(+) + 4 H(+)(out). NDH-1 shuttles electrons from NADH, via FMN and iron-sulfur (Fe-S) centers, to quinones in the respiratory chain. The immediate electron acceptor for the enzyme in this species is believed to be ubiquinone. Couples the redox reaction to proton translocation (for every two electrons transferred, four hydrogen ions are translocated across the cytoplasmic membrane), and thus conserves the redox energy in a proton gradient. This subunit may bind ubiquinone. In Leptospira borgpetersenii serovar Hardjo-bovis (strain JB197), this protein is NADH-quinone oxidoreductase subunit H.